A 1887-amino-acid chain; its full sequence is Fatty acid synthase subunit alpha (1887 aa).

A Glycyl lysine isopeptide (Lys-Gly) (interchain with G-Cter in ubiquitin) cross-link involves residue Lys37. Ser50 carries the post-translational modification Phosphoserine. The segment at 96 to 120 is disordered; sequence ELAAKEEPAKEEAPAPTPAASAPAP. A compositionally biased stretch (basic and acidic residues) spans 98-108; it reads AAKEEPAKEEA. Positions 145 to 220 constitute a Carrier domain; it reads VKASLLLHVL…ETFQDTFSGA (76 aa). Residue Ser180 is modified to O-(pantetheine 4'-phosphoryl)serine. Ser523 is modified (phosphoserine). The segment at 675-874 is beta-ketoacyl reductase; that stretch reads DKYVLITGAG…CGAIIGWTRG (200 aa). Ser958 carries the phosphoserine modification. The Ketosynthase family 3 (KS3) domain occupies 1123-1657; it reads QEVIVEEDLE…QKGGQAIVVH (535 aa). Catalysis depends on Cys1305, which acts as the For beta-ketoacyl synthase activity. Position 1440 is a phosphoserine (Ser1440). Catalysis depends on for beta-ketoacyl synthase activity residues His1542 and His1583. Asp1772, Val1773, and Glu1774 together coordinate Mg(2+). Acetyl-CoA-binding positions include 1772–1774, Tyr1798, Ser1808, 1817–1827, 1841–1844, and 1871–1873; these read DVE, EAVFKSLGVKS, RVNK, and ISH. Residues Ser1872 and His1873 each coordinate Mg(2+).

It belongs to the thiolase-like superfamily. Fungal fatty acid synthetase subunit alpha family. In terms of assembly, [Alpha(6)beta(6)] hexamers of two multifunctional subunits (alpha and beta). 4'-phosphopantetheine is transferred from CoA to a specific serine of the Acyl carrier domain by the C-terminal PPT domain. This modification is essential for activity because fatty acids are bound in thioester linkage to the sulfhydryl of the prosthetic group.

The catalysed reaction is acetyl-CoA + n malonyl-CoA + 2n NADPH + 4n H(+) = a long-chain-acyl-CoA + n CoA + n CO2 + 2n NADP(+).. The enzyme catalyses a fatty acyl-[ACP] + malonyl-[ACP] + H(+) = a 3-oxoacyl-[ACP] + holo-[ACP] + CO2. It catalyses the reaction a (3R)-hydroxyacyl-[ACP] + NADP(+) = a 3-oxoacyl-[ACP] + NADPH + H(+). Its activity is regulated as follows. Inhibited by cerulenin by covalent binding to active site of the ketoacyl synthase (KS) region. In terms of biological role, fatty acid synthetase catalyzes the formation of long-chain fatty acids from acetyl-CoA, malonyl-CoA and NADPH. The alpha subunit contains domains for: acyl carrier protein, 3-oxoacyl-[acyl-carrier-protein] reductase, and 3-oxoacyl-[acyl-carrier-protein] synthase. This subunit coordinates the binding of the six beta subunits to the enzyme complex. The protein is Fatty acid synthase subunit alpha (FAS2) of Saccharomyces cerevisiae (strain ATCC 204508 / S288c) (Baker's yeast).